Here is a 141-residue protein sequence, read N- to C-terminus: Hemoglobin subunit alpha-A (141 aa).

The 141-residue stretch at 1–141 folds into the Globin domain; the sequence is VLSASDKANV…VGTVLTAKYR (141 aa). His-58 lines the O2 pocket. His-87 serves as a coordination point for heme b.

Belongs to the globin family. As to quaternary structure, heterotetramer of two alpha chains and two beta chains. As to expression, red blood cells.

Its function is as follows. Involved in oxygen transport from the lung to the various peripheral tissues. This Sturnus vulgaris (Starling) protein is Hemoglobin subunit alpha-A (HBAA).